The sequence spans 438 residues: Acyl-CoA dehydrogenase apdG (438 aa).

It belongs to the acyl-CoA dehydrogenase family. It depends on FAD as a cofactor.

Its pathway is secondary metabolite biosynthesis. Functionally, acyl-CoA dehydrogenase; part of the gene cluster that mediates the biosynthesis of aspyridones. The polyketide-amino acid backbone preaspyridone A is first assembled by the PKS-NRPS hybrid apdA. The assembly of preaspyridone A is initiated by loading of malonyl-CoA onto apdA, followed by decarboxylation to yield the acetyl starter unit. The growing polyketide chain then elongates into a tetraketide. The adpA PKS module catalyzes three Claisen condensations, as well as beta-keto processing and methylation. Alpha-methylation step during polyketide synthesis is a prerequisite and a key checkpoint for chain transfer between PKS and NRPS modules. The downstream NRPS module contains the condensation (C), adenylation (A), and thiolation (T) domains and catalyzes the incorporation of tyrosine via the formation of the L-tyrosinyl-thioester and the amide linkage between L-tyrosinyl-thioester and the tetraketide. The bimodular assembly line is terminated with a reductase (R) domain that facilitates formation and release of the tetramic acid product. Because apdA lacks a designated enoylreductase (ER) domain, the required activity is provided the enoyl reductase apdC. ApdC appears to operate with different stereoselectivity in different PKS cycle. Combined with apdC, apdA is proposed to synthesize preaspyridone A via about 20 enzymatic steps. A number of oxidative steps performed successively by the cytochrome P450 monooxygenases apdE and apdB are required for the conversion of preaspyridone A to aspyridone A. The cytochrome P450 monooxygenase apdE is responsible for the oxidative dephenylation of preaspyridone A. Finally, the predicted FAD-dependent monooxygenase apdD and the acyl-CoA dehydrogenase apdG may be involved in the transformation of aspyridone A into aspyridone B. The polypeptide is Acyl-CoA dehydrogenase apdG (Emericella nidulans (strain FGSC A4 / ATCC 38163 / CBS 112.46 / NRRL 194 / M139) (Aspergillus nidulans)).